We begin with the raw amino-acid sequence, 1220 residues long: Plasma membrane calcium-transporting ATPase 1 (1220 aa).

Position 2 is an N-acetylglycine (G2). Over 2–105 (GDMANNSVAY…KTFLQLVWEA (104 aa)) the chain is Cytoplasmic. S8 and S17 each carry phosphoserine. Residues 106-126 (LQDVTLIILEIAAIVSLGLSF) traverse the membrane as a helical segment. Residues 127–154 (YQPPEGDNALCGEVSVGEEEGEGETGWI) are Extracellular-facing. Residues 155–175 (EGAAILLSVVCVVLVTAFNDW) form a helical membrane-spanning segment. Residues 176-366 (SKEKQFRGLQ…KEKSVLQGKL (191 aa)) lie on the Cytoplasmic side of the membrane. The segment at 297–356 (EEEKKDEKKKEKKNKKQDGAIENRNKAKAQDGAAMEMQPLKSEEGGDGDEKDKKKANLPK) is disordered. Composition is skewed to basic and acidic residues over residues 312 to 325 (KQDGAIENRNKAKA) and 337 to 356 (KSEEGGDGDEKDKKKANLPK). S338 carries the post-translational modification Phosphoserine. The chain crosses the membrane as a helical span at residues 367-386 (TKLAVQIGKAGLLMSAITVI). The Extracellular segment spans residues 387–418 (ILVLYFVIDTFWVQKRPWLAECTPIYIQYFVK). The helical transmembrane segment at 419 to 439 (FFIIGVTVLVVAVPEGLPLAV) threads the bilayer. At 440–855 (TISLAYSVKK…RNVYDSISKF (416 aa)) the chain is on the cytoplasmic side. The active-site 4-aspartylphosphate intermediate is the D475. The Mg(2+) site is built by D475, T477, D797, and D801. Residues 856–876 (LQFQLTVNVVAVIVAFTGACI) traverse the membrane as a helical segment. Topologically, residues 877-882 (TQDSPL) are extracellular. A helical transmembrane segment spans residues 883 to 903 (KAVQMLWVNLIMDTLASLALA). At 904–927 (TEPPTESLLLRKPYGRNKPLISRT) the chain is on the cytoplasmic side. The chain crosses the membrane as a helical span at residues 928–948 (MMKNILGHAFYQLVVVFTLLF). The Extracellular segment spans residues 949–971 (AGEKFFDIDSGRNAPLHAPPSEH). A helical transmembrane segment spans residues 972-991 (YTIVFNTFVLMQLFNEINAR). Residues 992 to 1005 (KIHGERNVFEGIFN) are Cytoplasmic-facing. Residues 1006–1027 (NAIFCTIVLGTFVVQIIIVQFG) traverse the membrane as a helical segment. At 1028–1039 (GKPFSCSELSIE) the chain is on the extracellular side. A helical transmembrane segment spans residues 1040-1060 (QWLWSIFLGMGTLLWGQLIST). Over 1061 to 1220 (IPTSRLKFLK…SPLHSLETSL (160 aa)) the chain is Cytoplasmic. Positions 1100 to 1117 (LRRGQILWFRGLNRIQTQ) are calmodulin-binding subdomain A. At T1116 the chain carries Phosphothreonine; by PKC. The interval 1118–1127 (IRVVNAFRSS) is calmodulin-binding subdomain B. The required for basolateral membrane targeting stretch occupies residues 1118–1220 (IRVVNAFRSS…SPLHSLETSL (103 aa)). S1140 and S1155 each carry phosphoserine. Residues 1160–1220 (PLIDDTDAED…SPLHSLETSL (61 aa)) form a disordered region. Phosphothreonine is present on T1165. S1178 and S1182 each carry phosphoserine. Positions 1200 to 1220 (MNKSATSSSPGSPLHSLETSL) are enriched in polar residues.

Belongs to the cation transport ATPase (P-type) (TC 3.A.3) family. Type IIB subfamily. In terms of assembly, monomer. Dimer. Oligomer. Calmodulin binding. Interacts with PDZD11. Interacts with SLC35G1 and STIM1. Interacts with YWHAE; interacts with the monomeric and dimeric forms of the YWHAE but prefer the monomer form; this interaction inhibits calcium-transporting ATPase activity. Interacts with NPTN; this interaction stabilizes ATP2B1 and increases ATPase activity; this interaction controls T cell calcium homeostasis following T cell activation. Interacts with EPB41; regulates small intestinal calcium absorption through regulation of membrane expression of ATP2B1.

The protein resides in the cell membrane. It is found in the basolateral cell membrane. The protein localises to the synapse. It localises to the presynaptic cell membrane. Its subcellular location is the cytoplasmic vesicle. The protein resides in the secretory vesicle. It is found in the synaptic vesicle membrane. It carries out the reaction Ca(2+)(in) + ATP + H2O = Ca(2+)(out) + ADP + phosphate + H(+). In terms of biological role, catalyzes the hydrolysis of ATP coupled with the transport of calcium from the cytoplasm to the extracellular space thereby maintaining intracellular calcium homeostasis. Plays a role in blood pressure regulation through regulation of intracellular calcium concentration and nitric oxide production leading to regulation of vascular smooth muscle cells vasoconstriction. Positively regulates bone mineralization through absorption of calcium from the intestine. Plays dual roles in osteoclast differentiation and survival by regulating RANKL-induced calcium oscillations in preosteoclasts and mediating calcium extrusion in mature osteoclasts. Regulates insulin sensitivity through calcium/calmodulin signaling pathway by regulating AKT1 activation and NOS3 activation in endothelial cells. May play a role in synaptic transmission by modulating calcium and proton dynamics at the synaptic vesicles. In Sus scrofa (Pig), this protein is Plasma membrane calcium-transporting ATPase 1.